Here is a 106-residue protein sequence, read N- to C-terminus: ATP-dependent Clp protease adapter protein ClpS (106 aa).

Belongs to the ClpS family. Binds to the N-terminal domain of the chaperone ClpA.

In terms of biological role, involved in the modulation of the specificity of the ClpAP-mediated ATP-dependent protein degradation. This is ATP-dependent Clp protease adapter protein ClpS from Sodalis glossinidius (strain morsitans).